Reading from the N-terminus, the 221-residue chain is Imidazoleglycerol-phosphate dehydratase (221 aa).

Belongs to the imidazoleglycerol-phosphate dehydratase family.

It carries out the reaction D-erythro-1-(imidazol-4-yl)glycerol 3-phosphate = 3-(imidazol-4-yl)-2-oxopropyl phosphate + H2O. Its pathway is amino-acid biosynthesis; L-histidine biosynthesis; L-histidine from 5-phospho-alpha-D-ribose 1-diphosphate: step 6/9. The sequence is that of Imidazoleglycerol-phosphate dehydratase (HIS3) from Kluyveromyces marxianus (Yeast).